Here is a 271-residue protein sequence, read N- to C-terminus: Mannosyl-3-phosphoglycerate phosphatase (271 aa).

D13 functions as the Nucleophile in the catalytic mechanism. Residues D13, D15, and D214 each contribute to the Mg(2+) site.

Belongs to the HAD-like hydrolase superfamily. MPGP family. Mg(2+) is required as a cofactor.

The protein localises to the cytoplasm. It catalyses the reaction 2-O-(alpha-D-mannosyl)-3-phosphoglycerate + H2O = (2R)-2-O-(alpha-D-mannosyl)-glycerate + phosphate. In Escherichia coli O7:K1 (strain IAI39 / ExPEC), this protein is Mannosyl-3-phosphoglycerate phosphatase.